The primary structure comprises 176 residues: MSLLNVPAGKELPEDIYVVIEIPANADPIKYEVDKESGALFVDRFMSTAMFYPCNYGYINHTLSLDGDPVDVLVPTPYPLQPGAVIRCRPVGVLKMTDESGEDAKLVAVPHTKLSKEYDHIKDVNDLPELLKAQITHFFEHYKDLEKGKWVKVDGWDNAEAAKAEIVASFERAAKK.

Lys30, Arg44, and Tyr56 together coordinate substrate. Residues Asp66, Asp71, and Asp103 each contribute to the Mg(2+) site. Tyr142 contacts substrate.

It belongs to the PPase family. Homohexamer. The cofactor is Mg(2+).

The protein resides in the cytoplasm. It catalyses the reaction diphosphate + H2O = 2 phosphate + H(+). In terms of biological role, catalyzes the hydrolysis of inorganic pyrophosphate (PPi) forming two phosphate ions. The polypeptide is Inorganic pyrophosphatase (Salmonella typhi).